The chain runs to 642 residues: Threonine--tRNA ligase (642 aa).

The region spanning M1 to T61 is the TGS domain. Residues D244 to P535 are catalytic. Zn(2+)-binding residues include C335, H386, and H512.

Belongs to the class-II aminoacyl-tRNA synthetase family. Homodimer. It depends on Zn(2+) as a cofactor.

The protein localises to the cytoplasm. The enzyme catalyses tRNA(Thr) + L-threonine + ATP = L-threonyl-tRNA(Thr) + AMP + diphosphate + H(+). Catalyzes the attachment of threonine to tRNA(Thr) in a two-step reaction: L-threonine is first activated by ATP to form Thr-AMP and then transferred to the acceptor end of tRNA(Thr). Also edits incorrectly charged L-seryl-tRNA(Thr). This Vibrio parahaemolyticus serotype O3:K6 (strain RIMD 2210633) protein is Threonine--tRNA ligase.